The following is an 854-amino-acid chain: Fibronectin-binding protein PlpA (854 aa).

A compositionally biased stretch (low complexity) spans M1 to G24. A disordered region spans residues M1–A33. Positions Q91–N109 are fibronectin-binding. 4 disordered regions span residues Y247–P327, S411–N434, T743–P766, and I835–R854. Residues E258 to E267 are compositionally biased toward basic and acidic residues. 2 stretches are compositionally biased toward polar residues: residues T311 to I320 and S411 to E428. Residues N384 to V622 adopt a coiled-coil conformation. Residues P746 to L764 show a composition bias toward pro residues.

It localises to the cell membrane. In terms of biological role, binds immobilized fibronectin, specifically the gelatin/heparin-binding domain. The chain is Fibronectin-binding protein PlpA (plpA) from Mycoplasmoides gallisepticum (strain R(low / passage 15 / clone 2)) (Mycoplasma gallisepticum).